The primary structure comprises 559 residues: Formate--tetrahydrofolate ligase (559 aa).

Residue 68-75 (TPAGEGKS) coordinates ATP.

It belongs to the formate--tetrahydrofolate ligase family.

It carries out the reaction (6S)-5,6,7,8-tetrahydrofolate + formate + ATP = (6R)-10-formyltetrahydrofolate + ADP + phosphate. It functions in the pathway one-carbon metabolism; tetrahydrofolate interconversion. The sequence is that of Formate--tetrahydrofolate ligase from Bacillus licheniformis (strain ATCC 14580 / DSM 13 / JCM 2505 / CCUG 7422 / NBRC 12200 / NCIMB 9375 / NCTC 10341 / NRRL NRS-1264 / Gibson 46).